The chain runs to 116 residues: MSVKKETRLRRARKARLKMRELETVRLCVYRSSQHIYAQVIAADGGKVLASASTLDKDLREGATGNIDAAKKVGQLVAERAKAAGVTQVAFDRSGFKYHGRVKALADAAREGGLEF.

Belongs to the universal ribosomal protein uL18 family. As to quaternary structure, part of the 50S ribosomal subunit; part of the 5S rRNA/L5/L18/L25 subcomplex. Contacts the 5S and 23S rRNAs.

Its function is as follows. This is one of the proteins that bind and probably mediate the attachment of the 5S RNA into the large ribosomal subunit, where it forms part of the central protuberance. This Pseudomonas aeruginosa (strain UCBPP-PA14) protein is Large ribosomal subunit protein uL18.